Consider the following 536-residue polypeptide: Putative cysteine ligase BshC (536 aa).

Belongs to the BshC family.

In terms of biological role, involved in bacillithiol (BSH) biosynthesis. May catalyze the last step of the pathway, the addition of cysteine to glucosamine malate (GlcN-Mal) to generate BSH. This chain is Putative cysteine ligase BshC, found in Anoxybacillus flavithermus (strain DSM 21510 / WK1).